A 233-amino-acid chain; its full sequence is Large ribosomal subunit protein uL3 (233 aa).

A disordered region spans residues 145–172 (FGSQRASHGNSRSHRVPGSIGQAQDPGR). N5-methylglutamine is present on glutamine 168.

The protein belongs to the universal ribosomal protein uL3 family. In terms of assembly, part of the 50S ribosomal subunit. Forms a cluster with proteins L14 and L19. Methylated by PrmB.

One of the primary rRNA binding proteins, it binds directly near the 3'-end of the 23S rRNA, where it nucleates assembly of the 50S subunit. The chain is Large ribosomal subunit protein uL3 from Bordetella petrii (strain ATCC BAA-461 / DSM 12804 / CCUG 43448).